A 490-amino-acid polypeptide reads, in one-letter code: Cytochrome P450 2C6 (490 aa).

N6-acetyllysine is present on residues Lys249 and Lys375. Residue Cys435 participates in heme binding.

Belongs to the cytochrome P450 family. It depends on heme as a cofactor.

It localises to the endoplasmic reticulum membrane. Its subcellular location is the microsome membrane. It carries out the reaction an organic molecule + reduced [NADPH--hemoprotein reductase] + O2 = an alcohol + oxidized [NADPH--hemoprotein reductase] + H2O + H(+). In terms of biological role, cytochromes P450 are a group of heme-thiolate monooxygenases. In liver microsomes, this enzyme is involved in an NADPH-dependent electron transport pathway. It oxidizes a variety of structurally unrelated compounds, including steroids, fatty acids, and xenobiotics. This chain is Cytochrome P450 2C6 (Cyp2c6), found in Rattus norvegicus (Rat).